Consider the following 462-residue polypeptide: GTPase HflX (462 aa).

One can recognise a Hflx-type G domain in the interval 255–452 (PAVGIVGYTN…LLEEKIYNLP (198 aa)). GTP is bound by residues 261–268 (GYTNAGKS), 286–290 (FATLD), 308–311 (DTVG), 374–377 (NKID), and 430–432 (SAY). Mg(2+) is bound by residues S268 and T288.

This sequence belongs to the TRAFAC class OBG-HflX-like GTPase superfamily. HflX GTPase family. As to quaternary structure, monomer. Associates with the 50S ribosomal subunit. Mg(2+) serves as cofactor.

It localises to the cytoplasm. Its function is as follows. GTPase that associates with the 50S ribosomal subunit and may have a role during protein synthesis or ribosome biogenesis. The protein is GTPase HflX of Leptospira borgpetersenii serovar Hardjo-bovis (strain JB197).